The sequence spans 172 residues: LOB domain-containing protein 4 (172 aa).

The 102-residue stretch at 12–113 (SPCAACKLLR…AQLALAQAEV (102 aa)) folds into the LOB domain. Residues 125–152 (PGHGLCPDSPSSSGSPSSKQVSPQDNKG) form a disordered region. A compositionally biased stretch (low complexity) spans 131 to 147 (PDSPSSSGSPSSKQVSP).

The protein belongs to the LOB domain-containing protein family. Expressed in young shoots, roots, stems, leaves and flowers.

The polypeptide is LOB domain-containing protein 4 (LBD4) (Arabidopsis thaliana (Mouse-ear cress)).